The sequence spans 310 residues: Small ribosomal subunit biogenesis GTPase RsgA (310 aa).

Residues K77 to L236 enclose the CP-type G domain. GTP-binding positions include S126–D129 and G179–T187. C260, C266, H268, and C274 together coordinate Zn(2+).

It belongs to the TRAFAC class YlqF/YawG GTPase family. RsgA subfamily. As to quaternary structure, monomer. Associates with 30S ribosomal subunit, binds 16S rRNA. Zn(2+) is required as a cofactor.

The protein localises to the cytoplasm. Functionally, one of several proteins that assist in the late maturation steps of the functional core of the 30S ribosomal subunit. Helps release RbfA from mature subunits. May play a role in the assembly of ribosomal proteins into the subunit. Circularly permuted GTPase that catalyzes slow GTP hydrolysis, GTPase activity is stimulated by the 30S ribosomal subunit. In Phytoplasma australiense, this protein is Small ribosomal subunit biogenesis GTPase RsgA.